The following is a 175-amino-acid chain: Large ribosomal subunit protein uL10 (175 aa).

This sequence belongs to the universal ribosomal protein uL10 family. Part of the ribosomal stalk of the 50S ribosomal subunit. The N-terminus interacts with L11 and the large rRNA to form the base of the stalk. The C-terminus forms an elongated spine to which L12 dimers bind in a sequential fashion forming a multimeric L10(L12)X complex.

Functionally, forms part of the ribosomal stalk, playing a central role in the interaction of the ribosome with GTP-bound translation factors. This is Large ribosomal subunit protein uL10 from Prochlorococcus marinus subsp. pastoris (strain CCMP1986 / NIES-2087 / MED4).